We begin with the raw amino-acid sequence, 391 residues long: Succinate--CoA ligase [ADP-forming] subunit beta (391 aa).

The 238-residue stretch at K9 to Q246 folds into the ATP-grasp domain. Residues K46, G53–G55, E99, L102, and E107 contribute to the ATP site. 2 residues coordinate Mg(2+): N199 and D213. Residues N266 and G323–V325 contribute to the substrate site.

This sequence belongs to the succinate/malate CoA ligase beta subunit family. Heterotetramer of two alpha and two beta subunits. It depends on Mg(2+) as a cofactor.

It catalyses the reaction succinate + ATP + CoA = succinyl-CoA + ADP + phosphate. It carries out the reaction GTP + succinate + CoA = succinyl-CoA + GDP + phosphate. Its pathway is carbohydrate metabolism; tricarboxylic acid cycle; succinate from succinyl-CoA (ligase route): step 1/1. In terms of biological role, succinyl-CoA synthetase functions in the citric acid cycle (TCA), coupling the hydrolysis of succinyl-CoA to the synthesis of either ATP or GTP and thus represents the only step of substrate-level phosphorylation in the TCA. The beta subunit provides nucleotide specificity of the enzyme and binds the substrate succinate, while the binding sites for coenzyme A and phosphate are found in the alpha subunit. The polypeptide is Succinate--CoA ligase [ADP-forming] subunit beta (Alkalilimnicola ehrlichii (strain ATCC BAA-1101 / DSM 17681 / MLHE-1)).